The following is an 83-amino-acid chain: Cytochrome b559 subunit alpha (83 aa).

The chain crosses the membrane as a helical span at residues 21 to 35 (VIHSITIPSLFIAGW). H23 lines the heme pocket.

This sequence belongs to the PsbE/PsbF family. As to quaternary structure, heterodimer of an alpha subunit and a beta subunit. PSII is composed of 1 copy each of membrane proteins PsbA, PsbB, PsbC, PsbD, PsbE, PsbF, PsbH, PsbI, PsbJ, PsbK, PsbL, PsbM, PsbT, PsbX, PsbY, PsbZ, Psb30/Ycf12, at least 3 peripheral proteins of the oxygen-evolving complex and a large number of cofactors. It forms dimeric complexes. It depends on heme b as a cofactor.

The protein localises to the plastid. It is found in the chloroplast thylakoid membrane. In terms of biological role, this b-type cytochrome is tightly associated with the reaction center of photosystem II (PSII). PSII is a light-driven water:plastoquinone oxidoreductase that uses light energy to abstract electrons from H(2)O, generating O(2) and a proton gradient subsequently used for ATP formation. It consists of a core antenna complex that captures photons, and an electron transfer chain that converts photonic excitation into a charge separation. The polypeptide is Cytochrome b559 subunit alpha (Agrostis stolonifera (Creeping bentgrass)).